Reading from the N-terminus, the 433-residue chain is Protein disulfide-isomerase A6 homolog (433 aa).

The N-terminal stretch at 1-19 (MRQLASILLLAFVVGSVSA) is a signal peptide. Thioredoxin domains lie at 20–119 (FYSP…GQRT) and 120–267 (AKAI…KHVA). Residues cysteine 55, cysteine 58, cysteine 186, and cysteine 189 each act as nucleophile in the active site. Disulfide bonds link cysteine 55-cysteine 58 and cysteine 186-cysteine 189. N-linked (GlcNAc...) asparagine glycosylation occurs at asparagine 279. The segment at 405 to 433 (VDPWDGKDGQLPTEEDIDLSDIDLDKDEL) is disordered. The span at 417–433 (TEEDIDLSDIDLDKDEL) shows a compositional bias: acidic residues. The short motif at 430–433 (KDEL) is the Prevents secretion from ER element.

Belongs to the protein disulfide isomerase family. In terms of assembly, interacts with Drpr (via extracellular region). As to expression, in the blastoderm embryo, expression starts at the anterior and posterior poles and later appears as broad stripes. Following gastrulation, expressed in midline precursor cells and the posterior head with low levels present throughout the embryo. During germ band extension, weak dorsoventral stripes of expression are evident. Midline expression begins and is retained throughout embryogenesis in clusters of cells in each segment in the central nervous system. At least some of the midline expression occurs in VUM neurons.

The protein localises to the endoplasmic reticulum lumen. It localises to the cell surface. It carries out the reaction Catalyzes the rearrangement of -S-S- bonds in proteins.. In terms of biological role, binds to both apoptotic cells and phagocytes and promotes Drpr-dependent phagocytosis of apoptotic cells. The protein is Protein disulfide-isomerase A6 homolog of Drosophila melanogaster (Fruit fly).